Reading from the N-terminus, the 70-residue chain is Probable U6 snRNA-associated Sm-like protein (70 aa).

The 68-residue stretch at 3 to 70 (DPFCFLKMYL…ILFVGPRLLL (68 aa)) folds into the Sm domain.

The protein belongs to the snRNP Sm proteins family.

The protein resides in the nucleus. Functionally, binds specifically to the 3'-terminal U-tract of U6 snRNA. This chain is Probable U6 snRNA-associated Sm-like protein, found in Encephalitozoon cuniculi (strain GB-M1) (Microsporidian parasite).